Here is a 337-residue protein sequence, read N- to C-terminus: Tetraacyldisaccharide 4'-kinase (337 aa).

58-65 (TVGGSGKT) contacts ATP.

This sequence belongs to the LpxK family.

The catalysed reaction is a lipid A disaccharide + ATP = a lipid IVA + ADP + H(+). The protein operates within glycolipid biosynthesis; lipid IV(A) biosynthesis; lipid IV(A) from (3R)-3-hydroxytetradecanoyl-[acyl-carrier-protein] and UDP-N-acetyl-alpha-D-glucosamine: step 6/6. Functionally, transfers the gamma-phosphate of ATP to the 4'-position of a tetraacyldisaccharide 1-phosphate intermediate (termed DS-1-P) to form tetraacyldisaccharide 1,4'-bis-phosphate (lipid IVA). This Shewanella putrefaciens (strain CN-32 / ATCC BAA-453) protein is Tetraacyldisaccharide 4'-kinase.